Reading from the N-terminus, the 151-residue chain is High mobility group B protein 14 (151 aa).

Disordered regions lie at residues 1–62 (MTKR…QTKM) and 132–151 (TKRM…DYSE). The segment covering 7-20 (KSGPLSPSCSGGSS) has biased composition (low complexity). The segment covering 35–56 (RSTRLRLQPLRKPKTSPKKKPV) has biased composition (basic residues). A DNA-binding region (HMG box) is located at residues 63 to 132 (PKKPATAFFF…EFHRAMTEYT (70 aa)). The span at 132 to 142 (TKRMESGAHDE) shows a compositional bias: basic and acidic residues. S150 is modified (phosphoserine).

The protein belongs to the HMGB family.

The protein resides in the nucleus. The polypeptide is High mobility group B protein 14 (HMGB14) (Arabidopsis thaliana (Mouse-ear cress)).